Here is a 196-residue protein sequence, read N- to C-terminus: Calcium channel flower (196 aa).

3 helical membrane passes run 35–55 (LGIV…LSII), 70–92 (LAGF…QVGS), and 113–133 (AVPP…GLIF).

It belongs to the calcium channel flower family. Homomultimer. Associates with the dally/ magu complex.

It is found in the cell membrane. Its subcellular location is the cytoplasmic vesicle. The protein localises to the secretory vesicle. The protein resides in the synaptic vesicle membrane. It localises to the presynaptic cell membrane. It is found in the endosome. With respect to regulation, channel activity is inhibited by La(3+), which reduces Ca(2+) influx and thus inhibits it's function in promoting activity-dependent bulk endocytosis (ADBE) in response to high stimuli. Transmembrane protein which mediates synaptic endocytosis, fitness-based cell culling, neuronal culling, morphogen gradient scaling, and calcium transport. Regulates synaptic endocytosis and hence couples exo- with endocytosis. Controls two major modes of synaptic vesicle (SV) endocytosis in the synaptic boutons of neuromuscular junctions (NMJs); Ca(2+) channel-independent Clathrin-mediated endocytosis (CME) in response to mild stimulation, and Ca(2+) channel-dependent activity-dependent bulk endocytosis (ADBE) in response to strong stimulation. Functions in ADBE and subsequent SV reformation from bulk endosomes by initiating Ca(2+) channel-dependent phosphatidylinositol 4,5-bisphosphate (PtdIns(4,5)P2) compartmentalization in synaptic boutons. There it acts at the periactive zone to provide the low Ca(2+) levels required to initiate Calcineurin activation and upregulate PtdIns(4,5)P2. Conversely PtdIns(4,5)P2 enhances fwe Ca(2+) channel-activity, establishing a positive feedback loop that induces PtdIns(4,5)P2 microdomain at the periactive zone. These microdomains trigger bulk membrane invagination (i.e. ADBE) by triggering actin polymerization while also promoting localization of fwe to bulk endosomes, thereby removing the ADBE trigger to reduce endocytosis and prevent excess membrane uptake. PtdIns(4,5)P2 then promotes SV reformation from the bulk endosomes, to coordinate ADBE and subsequent SV reformation. Different combinations of the flower isoforms at the cell membrane are also required for the identification and elimination of suboptimal or supernumerary cells during development, regeneration, and adulthood. Required for the recognition and elimination of unfit cells in the developing wing during cell competition. In the developing pupal retina, mediates the elimination of unwanted postmitotic neurons, including supernumerary photoreceptor neurons that form at the periphery of the retina and are contained within incomplete ommatidia units. Also required for efficient elimination and replacement of old neurons by newly generated neurons during regeneration in the adult brain following mechanical injury. Downstream of the flower fitness fingerprints, cells identified as unwanted or unfit are eliminated via apoptosis through the expression of ahuizotl (azot). However, the cells marked for elimination by the flower isoforms only undergo apoptosis if additional thresholds are met; (1) their neighboring fit/healthy cells express different levels of the fwe isoforms, and (2) the levels of the protective signal SPARC expressed by the loser or unwanted cells are unable to inhibit caspase activation. These additional thresholds for flower-mediated apoptosis, allows useful cells to recover from transient and limited stress before they are unnecessarily eliminated. Functions with dally and magu in a mechanism of scaling, which utilises apoptosis to ensure that the dpp morphogen gradient, which mediates organ growth, remains proportional to the size of the growing wing. In this mechanism, fwe represses dally- and Magu-dependent activity in expanding the gradient, and dally/Magu inhibits fwe-dependent apoptosis to keep cell death rate low. When the levels of these different proteins are optimally regulated the gradient correctly scales with organ growth but when this fails, fwe-mediated apoptosis is activated to trim the developing tissue to match the correct size of the gradient. In Drosophila grimshawi (Hawaiian fruit fly), this protein is Calcium channel flower.